Reading from the N-terminus, the 140-residue chain is Large ribosomal subunit protein bL17 (140 aa).

It belongs to the bacterial ribosomal protein bL17 family. As to quaternary structure, part of the 50S ribosomal subunit. Contacts protein L32.

In Rhizobium leguminosarum bv. trifolii (strain WSM2304), this protein is Large ribosomal subunit protein bL17.